Reading from the N-terminus, the 190-residue chain is Protein E6C (190 aa).

The segment covering 1-15 has biased composition (pro residues); the sequence is MFGVAKPPPSPIPKP. 2 disordered regions span residues 1–110 and 160–190; these read MFGV…EGRR and PRTPGPVAPIPELPGEADDPPTRTPPPPPDD. Positions 36-46 are enriched in basic residues; the sequence is ARQRASTRHRP. Composition is skewed to pro residues over residues 162-171 and 181-190; these read TPGPVAPIPE and TRTPPPPPDD.

The polypeptide is Protein E6C (13) (Equus caballus (Horse)).